The chain runs to 507 residues: Maturase K (507 aa).

It belongs to the intron maturase 2 family. MatK subfamily.

Its subcellular location is the plastid. The protein resides in the chloroplast. In terms of biological role, usually encoded in the trnK tRNA gene intron. Probably assists in splicing its own and other chloroplast group II introns. The chain is Maturase K from Buxus microphylla (Littleleaf boxwood).